The chain runs to 502 residues: ATP synthase subunit alpha (502 aa).

169–176 (GDRQTGKT) serves as a coordination point for ATP.

This sequence belongs to the ATPase alpha/beta chains family. In terms of assembly, F-type ATPases have 2 components, CF(1) - the catalytic core - and CF(0) - the membrane proton channel. CF(1) has five subunits: alpha(3), beta(3), gamma(1), delta(1), epsilon(1). CF(0) has three main subunits: a(1), b(2) and c(9-12). The alpha and beta chains form an alternating ring which encloses part of the gamma chain. CF(1) is attached to CF(0) by a central stalk formed by the gamma and epsilon chains, while a peripheral stalk is formed by the delta and b chains.

The protein localises to the cell membrane. It catalyses the reaction ATP + H2O + 4 H(+)(in) = ADP + phosphate + 5 H(+)(out). Its function is as follows. Produces ATP from ADP in the presence of a proton gradient across the membrane. The alpha chain is a regulatory subunit. The sequence is that of ATP synthase subunit alpha from Staphylococcus aureus (strain COL).